Reading from the N-terminus, the 64-residue chain is Small ribosomal subunit protein eS17 (64 aa).

It belongs to the eukaryotic ribosomal protein eS17 family.

The protein is Small ribosomal subunit protein eS17 of Methanocorpusculum labreanum (strain ATCC 43576 / DSM 4855 / Z).